Consider the following 82-residue polypeptide: Small ribosomal subunit protein bS16c (82 aa).

Belongs to the bacterial ribosomal protein bS16 family.

The protein resides in the plastid. It is found in the chloroplast. This is Small ribosomal subunit protein bS16c from Porphyra purpurea (Red seaweed).